A 376-amino-acid chain; its full sequence is Glucose-1-phosphate adenylyltransferase (376 aa).

Alpha-D-glucose 1-phosphate contacts are provided by residues Tyr101, Gly166, 181 to 182 (EK), and Ser192.

The protein belongs to the bacterial/plant glucose-1-phosphate adenylyltransferase family. As to quaternary structure, homotetramer.

The catalysed reaction is alpha-D-glucose 1-phosphate + ATP + H(+) = ADP-alpha-D-glucose + diphosphate. The protein operates within glycan biosynthesis; glycogen biosynthesis. Its function is as follows. Involved in the biosynthesis of ADP-glucose, a building block required for the elongation reactions to produce glycogen. Catalyzes the reaction between ATP and alpha-D-glucose 1-phosphate (G1P) to produce pyrophosphate and ADP-Glc. The protein is Glucose-1-phosphate adenylyltransferase of Bacillus cereus (strain ZK / E33L).